The sequence spans 94 residues: Putative pterin-4-alpha-carbinolamine dehydratase (94 aa).

It belongs to the pterin-4-alpha-carbinolamine dehydratase family.

It catalyses the reaction (4aS,6R)-4a-hydroxy-L-erythro-5,6,7,8-tetrahydrobiopterin = (6R)-L-erythro-6,7-dihydrobiopterin + H2O. In Mycolicibacterium smegmatis (strain ATCC 700084 / mc(2)155) (Mycobacterium smegmatis), this protein is Putative pterin-4-alpha-carbinolamine dehydratase.